A 179-amino-acid chain; its full sequence is Ribosomal RNA small subunit methyltransferase G (179 aa).

S-adenosyl-L-methionine is bound by residues Gly54, Phe59, 105-106 (IE), and Arg121.

It belongs to the methyltransferase superfamily. RNA methyltransferase RsmG family.

The protein localises to the cytoplasm. It catalyses the reaction guanosine(527) in 16S rRNA + S-adenosyl-L-methionine = N(7)-methylguanosine(527) in 16S rRNA + S-adenosyl-L-homocysteine. Its function is as follows. Specifically methylates the N7 position of guanine in position 527 of 16S rRNA. In Helicobacter bizzozeronii, this protein is Ribosomal RNA small subunit methyltransferase G.